A 663-amino-acid chain; its full sequence is Protein-arginine deiminase type-1 (663 aa).

The Ca(2+) site is built by Asn-153, Asp-155, Asp-157, Asp-165, Asp-176, Asp-179, Gln-351, Glu-353, Lys-364, Asp-371, Ser-372, Asn-375, Phe-409, and Leu-412. Cys-645 (nucleophile) is an active-site residue.

Belongs to the protein arginine deiminase family. Monomer. Ca(2+) serves as cofactor. In terms of tissue distribution, detected in epidermal keratinocytes (at protein level). Epidermis, prostate, testis, placenta, spleen and thymus.

The protein localises to the cytoplasm. It catalyses the reaction L-arginyl-[protein] + H2O = L-citrullyl-[protein] + NH4(+). Its function is as follows. Catalyzes the deimination of arginine residues of proteins. This Homo sapiens (Human) protein is Protein-arginine deiminase type-1 (PADI1).